Here is a 388-residue protein sequence, read N- to C-terminus: UDP-4-amino-4-deoxy-L-arabinose--oxoglutarate aminotransferase (388 aa).

Lys183 is modified (N6-(pyridoxal phosphate)lysine).

This sequence belongs to the DegT/DnrJ/EryC1 family. ArnB subfamily. As to quaternary structure, homodimer. It depends on pyridoxal 5'-phosphate as a cofactor.

The enzyme catalyses UDP-4-amino-4-deoxy-beta-L-arabinose + 2-oxoglutarate = UDP-beta-L-threo-pentopyranos-4-ulose + L-glutamate. Its pathway is nucleotide-sugar biosynthesis; UDP-4-deoxy-4-formamido-beta-L-arabinose biosynthesis; UDP-4-deoxy-4-formamido-beta-L-arabinose from UDP-alpha-D-glucuronate: step 2/3. The protein operates within bacterial outer membrane biogenesis; lipopolysaccharide biosynthesis. Functionally, catalyzes the conversion of UDP-4-keto-arabinose (UDP-Ara4O) to UDP-4-amino-4-deoxy-L-arabinose (UDP-L-Ara4N). The modified arabinose is attached to lipid A and is required for resistance to polymyxin and cationic antimicrobial peptides. This chain is UDP-4-amino-4-deoxy-L-arabinose--oxoglutarate aminotransferase, found in Shewanella sediminis (strain HAW-EB3).